The chain runs to 1229 residues: MRSRSNSGVRLDGYARLVHETILGFQNPVTGLLPASVQKKDAWVRDNVYSILAVWGLGMAYRKNADRDEDKAKAYELEQSVVKLMQGLLHCMMRQVAKVEKFKHTQSTTDCLHAKYDTSTCATVVGDDQWGHLQVDATSIYLLMLAQMTASGLRIISNLDEVAFVQNLVFYIEAAYKVADYGMWERGDKTNQGLPELNGSSVGMAKAALEAIDELDLFGAHGGPKSVIHVLPDEVEHCQSILCSMLPRASPSKEIDAGLLSVISFPAFAVEDADLVTITKSEIINKLQGRYGCCRFIRDGYHCPKEDPTRLHYDPAELKLFENIECEWPVFWTYLILDGIFAEDQVQVQEYREALEGVLIRGKNGIKLLPELYTVPFDKVEEEYRNPHSVDREATGQLPHMWEQSLYILGCLLAEGFLAPGEIDPLNRRFSTSFKPDVVVQVCVLAESQEIKALLSEQGMVVQTVAEVLPIRVMSARVLSQIYVRLGNCKKLSLSGRPYRHIGVLGTSKFYEIRNHTYTFTPQFLDQHHFYLALDNQMIVEMLRTELAYLSSCWRMTGRPTLTFPVTRSMLVEDGDAVDPCILSTLRKLQDGYFAGARVQMSDLSTFQTTSFHTRLSFLDEEHDDSLLEDDEEQEEEEEDKFEDDYNNYGPSGNNQVCYVSKDKFDQYLTQLLHSTTQKCHLPPIQRGQHHVFSAEHTTRDILSFMAQVQGLNVPKSSMYLPVTPLKSKHRRSLNLLDVPHPQHGPHLKQNKVGTFNSVLAADLHLPRDPQGKTDFATLVKQLKECPTLQDQADILYILNTSKGADWLVELSGPGQGGVSVHTLLEELYIQAGACKEWGLIRYISGILRKRVEVLAEACTDLISHHKQLTVGLPPEPRERVITVPLPPEELNTLIYEASGQDISVAVLTQEIMVYLAMYIRSQPALFGDMLRLRIGLIMQVMATELARSLHCSGEEASESLMSLSPFDMKNLLHHILSGKEFGVERSMRPIQSTATSPAISIHEIGHTGATKTERTGIRKLKSEIKQRCSSPSTPSGILSPVGPGPADGQLHWVERQGQWLRRRRLDGAINRVPVGFYQKVWKILQKCHGLSIDGYVLPSSTTREMTAGEIKFAVQVESVLNHVPQPEYRQLLVESVMVLGLVADVDVESIGSIIYVDRILHLANDLFLTDQKSYSAGDYFLEKDPETGICNFFYDSAPSGIYGTMTYLSKAAVTYIQDFLPSSSCIMQ.

Positions 625–646 (DSLLEDDEEQEEEEEDKFEDDY) are enriched in acidic residues. Residues 625–648 (DSLLEDDEEQEEEEEDKFEDDYNN) are disordered. The calmodulin-binding stretch occupies residues 825–855 (LEELYIQAGACKEWGLIRYISGILRKRVEVL). A disordered region spans residues 1024–1050 (EIKQRCSSPSTPSGILSPVGPGPADGQ). Residues 1028–1037 (RCSSPSTPSG) show a composition bias toward polar residues. The tract at residues 1052–1092 (HWVERQGQWLRRRRLDGAINRVPVGFYQKVWKILQKCHGLS) is calmodulin-binding. Cys-1226 carries the S-farnesyl cysteine lipid modification.

It belongs to the phosphorylase b kinase regulatory chain family. Polymer of 16 chains, four each of alpha, beta, gamma, and delta. Alpha and beta are regulatory chains, gamma is the catalytic chain, and delta is calmodulin. Although the final Cys may be farnesylated, the terminal tripeptide is probably not removed, and the C-terminus is not methylated.

The protein resides in the cell membrane. Its pathway is glycan biosynthesis; glycogen metabolism. Its activity is regulated as follows. By phosphorylation of various serine residues and by calcium. Its function is as follows. Phosphorylase b kinase catalyzes the phosphorylation of serine in certain substrates, including troponin I. The alpha chain may bind calmodulin. The chain is Phosphorylase b kinase regulatory subunit alpha, liver isoform (phka2) from Takifugu rubripes (Japanese pufferfish).